The primary structure comprises 264 residues: 3-methyl-2-oxobutanoate hydroxymethyltransferase (264 aa).

Positions 45 and 84 each coordinate Mg(2+). 3-methyl-2-oxobutanoate-binding positions include 45–46 (DS), Asp-84, and Lys-112. Residue Glu-114 coordinates Mg(2+). Glu-181 serves as the catalytic Proton acceptor.

The protein belongs to the PanB family. As to quaternary structure, homodecamer; pentamer of dimers. It depends on Mg(2+) as a cofactor.

The protein resides in the cytoplasm. The enzyme catalyses 3-methyl-2-oxobutanoate + (6R)-5,10-methylene-5,6,7,8-tetrahydrofolate + H2O = 2-dehydropantoate + (6S)-5,6,7,8-tetrahydrofolate. It functions in the pathway cofactor biosynthesis; (R)-pantothenate biosynthesis; (R)-pantoate from 3-methyl-2-oxobutanoate: step 1/2. Functionally, catalyzes the reversible reaction in which hydroxymethyl group from 5,10-methylenetetrahydrofolate is transferred onto alpha-ketoisovalerate to form ketopantoate. The polypeptide is 3-methyl-2-oxobutanoate hydroxymethyltransferase (Shewanella pealeana (strain ATCC 700345 / ANG-SQ1)).